Here is a 417-residue protein sequence, read N- to C-terminus: MFSFEKNSLKNTDKEIFDAIELEVKRQHEHVELIASENYASPAVMEAQGSQLTNKYAEGYHGKRYYGGCEFVDIAEKLAIERAQQLFGVDYANVQPHSGSQANAAVYNAVLKPGDTVLGMDLGAGGHLTHGSKVNFSGKIYNSIQYGLDENGDIDYEQVAQLAKEHKPKMIIAGFSAFSGIINWQKFREIADSVDAVLMADIAHVAGLVAAGVYPNPFPYVYVATTTTHKTLRGPRGGLILCNNNPELAKKFQSAIFPGIQGGPLMHVIAAKAVAFKEALEPSFVDYQKQVLKNAKAMEKVLKQRGINIISGGTSNHLLLLDITNTGFSGKEAEAALGRANITVNKNSIPNDPRSPFVTSGLRIGSPAITTRGFKEKECELVANLLADVVFNCGDEKVENETAAKVLDLCDKLPVYK.

Residues L122 and 126-128 each bind (6S)-5,6,7,8-tetrahydrofolate; that span reads GHL. N6-(pyridoxal phosphate)lysine is present on K230. (6S)-5,6,7,8-tetrahydrofolate is bound at residue 355 to 357; that stretch reads SPF.

Belongs to the SHMT family. In terms of assembly, homodimer. Pyridoxal 5'-phosphate is required as a cofactor.

It localises to the cytoplasm. The catalysed reaction is (6R)-5,10-methylene-5,6,7,8-tetrahydrofolate + glycine + H2O = (6S)-5,6,7,8-tetrahydrofolate + L-serine. It participates in one-carbon metabolism; tetrahydrofolate interconversion. The protein operates within amino-acid biosynthesis; glycine biosynthesis; glycine from L-serine: step 1/1. Its function is as follows. Catalyzes the reversible interconversion of serine and glycine with tetrahydrofolate (THF) serving as the one-carbon carrier. This reaction serves as the major source of one-carbon groups required for the biosynthesis of purines, thymidylate, methionine, and other important biomolecules. Also exhibits THF-independent aldolase activity toward beta-hydroxyamino acids, producing glycine and aldehydes, via a retro-aldol mechanism. This is Serine hydroxymethyltransferase from Francisella tularensis subsp. holarctica (strain LVS).